We begin with the raw amino-acid sequence, 796 residues long: Protocadherin beta-3 (796 aa).

A signal peptide spans 1-26; the sequence is MEAGGERFLRQRQVLLLFVFLGGSLA. Over 27 to 690 the chain is Extracellular; that stretch reads GSESRRYSVA…AQADLLTVYL (664 aa). 5 consecutive Cadherin domains span residues 35–133, 138–242, 247–347, 352–451, and 456–561; these read VAEE…SPVF, MHLK…APEF, YEVA…PPEL, VNSP…APAF, and YTLF…SPFV. The N-linked (GlcNAc...) asparagine glycan is linked to Asn-169. Residues Asn-418 and Asn-436 are each glycosylated (N-linked (GlcNAc...) asparagine). Asn-567 is a glycosylation site (N-linked (GlcNAc...) asparagine). One can recognise a Cadherin 6 domain in the interval 568–671; the sequence is GSAPCTELVP…LVDGFSQPYL (104 aa). Residues 691–711 traverse the membrane as a helical segment; it reads VVALASVSSLFLFSVLLFVAV. Over 712–796 the chain is Cytoplasmic; sequence RLCRRSRAAS…PSFRKSFEFS (85 aa).

Its subcellular location is the cell membrane. Functionally, potential calcium-dependent cell-adhesion protein. May be involved in the establishment and maintenance of specific neuronal connections in the brain. This chain is Protocadherin beta-3 (PCDHB3), found in Pan troglodytes (Chimpanzee).